A 97-amino-acid chain; its full sequence is MLIKQFSRRSKNMKVQILLAFAALFVLAVGSYASESKKLDLRDALLSAMFSADYQLNPQERGCRYFLGECKKTSECCEHLACHDKHKWCAWDWTIGK.

An N-terminal signal peptide occupies residues 1–33 (MLIKQFSRRSKNMKVQILLAFAALFVLAVGSYA). A propeptide spanning residues 34 to 61 (SESKKLDLRDALLSAMFSADYQLNPQER) is cleaved from the precursor. Disulfide bonds link C63–C77, C70–C82, and C76–C89.

It belongs to the neurotoxin 10 (Hwtx-1) family. 12 (Hntx-12) subfamily. In terms of tissue distribution, expressed by the venom gland.

The protein resides in the secreted. Its function is as follows. Ion channel inhibitor. The chain is U6-theraphotoxin-Hhn1a 4 from Cyriopagopus hainanus (Chinese bird spider).